We begin with the raw amino-acid sequence, 371 residues long: Aspartate-semialdehyde dehydrogenase (371 aa).

NADP(+)-binding positions include 9 to 12 (RGMV), 37 to 38 (TS), and glutamine 73. Arginine 102 serves as a coordination point for phosphate. Cysteine 135 functions as the Acyl-thioester intermediate in the catalytic mechanism. Glutamine 162 contacts substrate. NADP(+)-binding positions include 165 to 166 (SG) and proline 193. Glutamate 241 is a substrate binding site. Lysine 244 provides a ligand contact to phosphate. Substrate is bound at residue arginine 268. The active-site Proton acceptor is the histidine 275. Residue glutamine 351 participates in NADP(+) binding.

It belongs to the aspartate-semialdehyde dehydrogenase family. Homodimer.

It catalyses the reaction L-aspartate 4-semialdehyde + phosphate + NADP(+) = 4-phospho-L-aspartate + NADPH + H(+). The protein operates within amino-acid biosynthesis; L-lysine biosynthesis via DAP pathway; (S)-tetrahydrodipicolinate from L-aspartate: step 2/4. It participates in amino-acid biosynthesis; L-methionine biosynthesis via de novo pathway; L-homoserine from L-aspartate: step 2/3. Its pathway is amino-acid biosynthesis; L-threonine biosynthesis; L-threonine from L-aspartate: step 2/5. Its function is as follows. Catalyzes the NADPH-dependent formation of L-aspartate-semialdehyde (L-ASA) by the reductive dephosphorylation of L-aspartyl-4-phosphate. This chain is Aspartate-semialdehyde dehydrogenase, found in Neisseria meningitidis serogroup A / serotype 4A (strain DSM 15465 / Z2491).